Reading from the N-terminus, the 798-residue chain is MEIDKFVKEEDIPFEYGVVRERDNAVSWSRYLATKRSAGDELNLDWLYERCLKEIKDDWHLWKEFLKWRIELLNDCDIFRHKDEYNKISLLFEQCLTSCGKVGDAWIMYMEWVIQFKDLKRIRELLGKALRSMSWEYHEAIWRVVIDFIINELLIDNKRYELSLEDSIYYFVHGEHSTNFDTDLWSSSILQRYSLICDDIEPLLIYIFKTHDWSTIVRVFEKHLSPNLKPSQTSLFELYVSYITSMILVDNSAGVAAVVDQCIELFPFKKGELKTYLIFNLIRQGKITEAELYLEKVISETKDIIEFSVLYDFWIRMEELLTQELIQKMKDDNSEKQRLFANIRLHADTLTSLIKNHTIRLNDLELRREPNNIKLWLERVKLFDTISDKAKVYADAVLTVDYRLQTTPGLLGELWCQYCRLFEEDIEKSEVLLDKATNVPFKFLVDLENVWLYWCEYRLKRSIDDAIKVLSVVLEIPDNHELLLQKFEKGESPAQAAIFSSKRLWAMYLDLLEVKGNYGTAVNAYETAILIKAATPAMFINYALLNESSGHQAEALAVFERSVEIFPPSVSKSIWDIYLDVALKADITKEQKRDIFESAIKLAASGVACVSFFEKYSDFELNLGFHERSVEILHKGAKNISDLESKCTLWEECINRSEKQLDVNHTRKLYEECIETLPNSKAIKFLLPFAILEESRNEVARCRALLDYGSKLLKPAQNEELWDFWRNFETMHGTKDSFKNMLKARRFLEDTMKVNTEEVSRHADSIEFRASTAKISGSGPPSAEDKGYSNTAEIDLGL.

12 HAT repeats span residues 5–37, 39–71, 83–115, 117–151, 392–424, 428–460, 478–514, 516–548, 550–584, 587–622, 661–695, and 697–731; these read KFVK…TKRS, GDEL…WRIE, DEYN…WVIQ, KDLK…FIIN, VYAD…LFEE, KSEV…YRLK, DNHE…LLEV, GNYG…LNES, GHQA…VALK, ITKE…FELN, LDVN…LEES, and NEVA…FETM.

Belongs to the crooked-neck family. In terms of assembly, associated with the spliceosome.

The protein localises to the nucleus. In terms of biological role, involved in pre-mRNA splicing and cell cycle progression. The protein is Pre-mRNA-splicing factor SYF1 (SYF1) of Kluyveromyces lactis (strain ATCC 8585 / CBS 2359 / DSM 70799 / NBRC 1267 / NRRL Y-1140 / WM37) (Yeast).